We begin with the raw amino-acid sequence, 413 residues long: DNA polymerase IV 1 (413 aa).

One can recognise a UmuC domain in the interval 7-188; it reads IFHVDMNSFY…LPIEEMYGIG (182 aa). Mg(2+) is bound by residues Asp-11 and Asp-107. The active site involves Glu-108.

Belongs to the DNA polymerase type-Y family. In terms of assembly, monomer. The cofactor is Mg(2+).

The protein resides in the cytoplasm. The catalysed reaction is DNA(n) + a 2'-deoxyribonucleoside 5'-triphosphate = DNA(n+1) + diphosphate. Poorly processive, error-prone DNA polymerase involved in untargeted mutagenesis. Copies undamaged DNA at stalled replication forks, which arise in vivo from mismatched or misaligned primer ends. These misaligned primers can be extended by PolIV. Exhibits no 3'-5' exonuclease (proofreading) activity. May be involved in translesional synthesis, in conjunction with the beta clamp from PolIII. The sequence is that of DNA polymerase IV 1 (dinB1) from Halalkalibacterium halodurans (strain ATCC BAA-125 / DSM 18197 / FERM 7344 / JCM 9153 / C-125) (Bacillus halodurans).